The primary structure comprises 145 residues: 3-hydroxyacyl-[acyl-carrier-protein] dehydratase FabZ (145 aa).

His49 is a catalytic residue.

It belongs to the thioester dehydratase family. FabZ subfamily.

It localises to the cytoplasm. It catalyses the reaction a (3R)-hydroxyacyl-[ACP] = a (2E)-enoyl-[ACP] + H2O. Functionally, involved in unsaturated fatty acids biosynthesis. Catalyzes the dehydration of short chain beta-hydroxyacyl-ACPs and long chain saturated and unsaturated beta-hydroxyacyl-ACPs. In Rickettsia akari (strain Hartford), this protein is 3-hydroxyacyl-[acyl-carrier-protein] dehydratase FabZ.